We begin with the raw amino-acid sequence, 379 residues long: Chaperone protein DnaJ (379 aa).

The region spanning 5 to 69 is the J domain; that stretch reads EYYERLGVDK…QKRAAYDQYG (65 aa). A CR-type zinc finger spans residues 141–223; that stretch reads GVEKQVKYNR…CHGSGHEKVA (83 aa). Zn(2+)-binding residues include cysteine 154, cysteine 157, cysteine 171, cysteine 174, cysteine 197, cysteine 200, cysteine 211, and cysteine 214. 4 CXXCXGXG motif repeats span residues 154–161, 171–178, 197–204, and 211–218; these read CHTCDGSG, CHKCGGRG, CDVCHGTG, and CTTCHGSG.

This sequence belongs to the DnaJ family. In terms of assembly, homodimer. The cofactor is Zn(2+).

It localises to the cytoplasm. In terms of biological role, participates actively in the response to hyperosmotic and heat shock by preventing the aggregation of stress-denatured proteins and by disaggregating proteins, also in an autonomous, DnaK-independent fashion. Unfolded proteins bind initially to DnaJ; upon interaction with the DnaJ-bound protein, DnaK hydrolyzes its bound ATP, resulting in the formation of a stable complex. GrpE releases ADP from DnaK; ATP binding to DnaK triggers the release of the substrate protein, thus completing the reaction cycle. Several rounds of ATP-dependent interactions between DnaJ, DnaK and GrpE are required for fully efficient folding. Also involved, together with DnaK and GrpE, in the DNA replication of plasmids through activation of initiation proteins. The sequence is that of Chaperone protein DnaJ from Lactococcus lactis subsp. cremoris (strain SK11).